We begin with the raw amino-acid sequence, 83 residues long: Cell division topological specificity factor (83 aa).

This sequence belongs to the MinE family.

Its function is as follows. Prevents the cell division inhibition by proteins MinC and MinD at internal division sites while permitting inhibition at polar sites. This ensures cell division at the proper site by restricting the formation of a division septum at the midpoint of the long axis of the cell. This chain is Cell division topological specificity factor, found in Buchnera aphidicola subsp. Acyrthosiphon pisum (strain 5A).